We begin with the raw amino-acid sequence, 559 residues long: ADP,ATP carrier protein 1 (559 aa).

Positions 1-10 (MNEVENNNHS) are enriched in polar residues. The tract at residues 1–22 (MNEVENNNHSFPREDIPTEDEI) is disordered. N-linked (GlcNAc...) asparagine glycosylation is present at Asn-8. Helical transmembrane passes span 46 to 66 (FALLGLMFGIIGFIYSFMRIL), 79 to 99 (TILFIKIFYILPVSMALVFLI), 111 to 131 (IFSIFCGGFASLFFLCGAVFL), and 174 to 194 (IVFISAEMWGSLVLSYLFLSF). An N-linked (GlcNAc...) asparagine glycan is attached at Asn-196. Transmembrane regions (helical) follow at residues 210–230 (PLIIITNVSLFLSATVAGAFF) and 242–262 (QVLLSGIFIFQGFLVVLVIFL). N-linked (GlcNAc...) asparagine glycosylation occurs at Asn-290. Helical transmembrane passes span 305–325 (LLLAMSLIVLFFNISYNMVES), 354–373 (QYMTSVVVICLNLSPFSSYV), and 377–397 (GFLLVGLITPIVTLMAIVLFL). N-linked (GlcNAc...) asparagine glycosylation is present at Asn-403. 3 helical membrane-spanning segments follow: residues 425-447 (YVLENYFGVIFMSLLKITKYSAF), 473-493 (IFGKLGKSIGSIYGLLMFEAL), and 503-523 (PITAGIIFIFIVMWVKAIIYL).

The protein belongs to the ADP/ATP translocase tlc family.

Its subcellular location is the cell membrane. In terms of biological role, ATP transporter involved in the uptake of ATP from the host cell cytoplasm. Provides the microsporidian cell with host ATP in exchange for ADP. This is an obligate exchange system. This energy acquiring activity is an important component of microsporidian parasitism. In Encephalitozoon cuniculi (strain GB-M1) (Microsporidian parasite), this protein is ADP,ATP carrier protein 1 (NTT1).